A 413-amino-acid polypeptide reads, in one-letter code: tRNA (guanine-N(7)-)-methyltransferase non-catalytic subunit WDR4 (413 aa).

Position 2 is an N-acetylalanine (A2). WD repeat units follow at residues 61 to 100, 102 to 141, 145 to 185, 188 to 228, and 289 to 329; these read TGSD…CLSV, MVVR…GCGR, GHLS…IESF, GHTE…QLQC, and TFPH…WQAA. Residues 380–413 form a disordered region; it reads RLQQQLKKKRQRSPFPGSPEQTKKACPGQSALSC. Phosphoserine is present on residues S392 and S412.

It belongs to the WD repeat TRM82 family. As to quaternary structure, non-catalytic component of the METTL1-WDR4 complex, composed of METTL1 and WDR4. Interacts with FEN1; the interaction is direct.

The protein localises to the nucleus. It is found in the chromosome. Its pathway is tRNA modification; N(7)-methylguanine-tRNA biosynthesis. In terms of biological role, non-catalytic component of the METTL1-WDR4 methyltransferase complex required for the formation of N(7)-methylguanine in a subset of RNA species, such as tRNAs, mRNAs and microRNAs (miRNAs). In the METTL1-WDR4 methyltransferase complex, WDR4 acts as a scaffold for tRNA-binding. Required for the formation of N(7)-methylguanine at position 46 (m7G46) in a large subset of tRNAs that contain the 5'-RAGGU-3' motif within the variable loop. M7G46 interacts with C13-G22 in the D-loop to stabilize tRNA tertiary structure and protect tRNAs from decay. Also required for the formation of N(7)-methylguanine at internal sites in a subset of mRNAs. Also required for methylation of a specific subset of miRNAs, such as let-7. Acts as a regulator of embryonic stem cell self-renewal and differentiation. Independently of METTL1, also plays a role in genome stability: localizes at the DNA replication site and regulates endonucleolytic activities of FEN1. The sequence is that of tRNA (guanine-N(7)-)-methyltransferase non-catalytic subunit WDR4 from Mus musculus (Mouse).